We begin with the raw amino-acid sequence, 245 residues long: Rhamnosyl O-methyltransferase (245 aa).

The N-terminal stretch at 1 to 38 (MGLVWRSRTSLVGQLIGLVRLVASFAAQLFYRPSDAVA) is a signal peptide.

The protein belongs to the rhamnosyl O-methyltransferase family.

Its function is as follows. Catalyzes the O-methylation of the hydroxyl group located on C-2 of the first rhamnosyl residue linked to the phenolic group of glycosylated phenolphthiocerol dimycocerosates (PGL) and p-hydroxybenzoic acid derivatives (p-HBAD). The polypeptide is Rhamnosyl O-methyltransferase (Mycobacterium bovis (strain ATCC BAA-935 / AF2122/97)).